A 209-amino-acid chain; its full sequence is Pyridoxine/pyridoxamine 5'-phosphate oxidase (209 aa).

Residues 57–62 (RMVLLK), 72–73 (YT), Lys79, and Gln101 each bind FMN. Substrate is bound at residue Lys62. Substrate is bound by residues Tyr119, Arg123, and Ser127. FMN is bound by residues 136 to 137 (QS) and Trp181. Position 187 to 189 (187 to 189 (RLH)) interacts with substrate. Arg191 contributes to the FMN binding site.

It belongs to the pyridoxamine 5'-phosphate oxidase family. Homodimer. FMN serves as cofactor.

It carries out the reaction pyridoxamine 5'-phosphate + O2 + H2O = pyridoxal 5'-phosphate + H2O2 + NH4(+). The catalysed reaction is pyridoxine 5'-phosphate + O2 = pyridoxal 5'-phosphate + H2O2. Its pathway is cofactor metabolism; pyridoxal 5'-phosphate salvage; pyridoxal 5'-phosphate from pyridoxamine 5'-phosphate: step 1/1. It participates in cofactor metabolism; pyridoxal 5'-phosphate salvage; pyridoxal 5'-phosphate from pyridoxine 5'-phosphate: step 1/1. Functionally, catalyzes the oxidation of either pyridoxine 5'-phosphate (PNP) or pyridoxamine 5'-phosphate (PMP) into pyridoxal 5'-phosphate (PLP). This is Pyridoxine/pyridoxamine 5'-phosphate oxidase from Chelativorans sp. (strain BNC1).